Consider the following 358-residue polypeptide: Peptide chain release factor 1 (358 aa).

Gln-233 is subject to N5-methylglutamine. A compositionally biased stretch (basic and acidic residues) spans 282–306 (QRAASERSADRRGQVGSGDRSERVR). The segment at 282–308 (QRAASERSADRRGQVGSGDRSERVRTY) is disordered.

It belongs to the prokaryotic/mitochondrial release factor family. In terms of processing, methylated by PrmC. Methylation increases the termination efficiency of RF1.

The protein resides in the cytoplasm. Its function is as follows. Peptide chain release factor 1 directs the termination of translation in response to the peptide chain termination codons UAG and UAA. The sequence is that of Peptide chain release factor 1 from Afipia carboxidovorans (strain ATCC 49405 / DSM 1227 / KCTC 32145 / OM5) (Oligotropha carboxidovorans).